Here is a 156-residue protein sequence, read N- to C-terminus: SsrA-binding protein (156 aa).

Belongs to the SmpB family.

The protein localises to the cytoplasm. Its function is as follows. Required for rescue of stalled ribosomes mediated by trans-translation. Binds to transfer-messenger RNA (tmRNA), required for stable association of tmRNA with ribosomes. tmRNA and SmpB together mimic tRNA shape, replacing the anticodon stem-loop with SmpB. tmRNA is encoded by the ssrA gene; the 2 termini fold to resemble tRNA(Ala) and it encodes a 'tag peptide', a short internal open reading frame. During trans-translation Ala-aminoacylated tmRNA acts like a tRNA, entering the A-site of stalled ribosomes, displacing the stalled mRNA. The ribosome then switches to translate the ORF on the tmRNA; the nascent peptide is terminated with the 'tag peptide' encoded by the tmRNA and targeted for degradation. The ribosome is freed to recommence translation, which seems to be the essential function of trans-translation. The sequence is that of SsrA-binding protein from Paracoccus denitrificans (strain Pd 1222).